Reading from the N-terminus, the 314-residue chain is MSKPLRIVFAGTPDFAARHLAALLSSQHEVIAVYTQPDRPAGRGKKLTASPVKNIALENDLPVYQPASLRNEDAQQELAALKADIMVVVAYGLLLPKFVLDTPKLGCINVHGSILPRWRGAAPIQRSIWAGDEETGVTIMQMDEGLDTGDMLTIATLPIEPTDTSATMYDKLAGLGPNALIDCLSEISAGTAIAEKQNDELANYAKKLNKEEAKIDWAMEATAIERCIRAFNPWPMSYFAVAEQNVKVWHAVVEAENQGKAPGTILSADKQGITVATGKGALRLIELQPPGKKAMKAQDILNSRREWFELGTQL.

Residue 113–116 coordinates (6S)-5,6,7,8-tetrahydrofolate; sequence SILP.

This sequence belongs to the Fmt family.

It carries out the reaction L-methionyl-tRNA(fMet) + (6R)-10-formyltetrahydrofolate = N-formyl-L-methionyl-tRNA(fMet) + (6S)-5,6,7,8-tetrahydrofolate + H(+). Its function is as follows. Attaches a formyl group to the free amino group of methionyl-tRNA(fMet). The formyl group appears to play a dual role in the initiator identity of N-formylmethionyl-tRNA by promoting its recognition by IF2 and preventing the misappropriation of this tRNA by the elongation apparatus. The sequence is that of Methionyl-tRNA formyltransferase from Photobacterium profundum (strain SS9).